Consider the following 155-residue polypeptide: Ribonuclease H (155 aa).

The RNase H type-1 domain maps to 1–142 (MLKQVEIFTD…CDELARAAAM (142 aa)). 4 residues coordinate Mg(2+): Asp10, Glu48, Asp70, and Asp134.

The protein belongs to the RNase H family. As to quaternary structure, monomer. It depends on Mg(2+) as a cofactor.

Its subcellular location is the cytoplasm. The enzyme catalyses Endonucleolytic cleavage to 5'-phosphomonoester.. Functionally, endonuclease that specifically degrades the RNA of RNA-DNA hybrids. This Citrobacter koseri (strain ATCC BAA-895 / CDC 4225-83 / SGSC4696) protein is Ribonuclease H.